A 133-amino-acid polypeptide reads, in one-letter code: uncharacterized protein (133 aa).

This is an uncharacterized protein from Escherichia coli O157:H7.